Consider the following 199-residue polypeptide: Crossover junction endodeoxyribonuclease RuvC (199 aa).

Active-site residues include Asp17, Glu76, and Asp148. Mg(2+) is bound by residues Asp17, Glu76, and Asp148.

The protein belongs to the RuvC family. As to quaternary structure, homodimer which binds Holliday junction (HJ) DNA. The HJ becomes 2-fold symmetrical on binding to RuvC with unstacked arms; it has a different conformation from HJ DNA in complex with RuvA. In the full resolvosome a probable DNA-RuvA(4)-RuvB(12)-RuvC(2) complex forms which resolves the HJ. The cofactor is Mg(2+).

It localises to the cytoplasm. It carries out the reaction Endonucleolytic cleavage at a junction such as a reciprocal single-stranded crossover between two homologous DNA duplexes (Holliday junction).. In terms of biological role, the RuvA-RuvB-RuvC complex processes Holliday junction (HJ) DNA during genetic recombination and DNA repair. Endonuclease that resolves HJ intermediates. Cleaves cruciform DNA by making single-stranded nicks across the HJ at symmetrical positions within the homologous arms, yielding a 5'-phosphate and a 3'-hydroxyl group; requires a central core of homology in the junction. The consensus cleavage sequence is 5'-(A/T)TT(C/G)-3'. Cleavage occurs on the 3'-side of the TT dinucleotide at the point of strand exchange. HJ branch migration catalyzed by RuvA-RuvB allows RuvC to scan DNA until it finds its consensus sequence, where it cleaves and resolves the cruciform DNA. This Mannheimia succiniciproducens (strain KCTC 0769BP / MBEL55E) protein is Crossover junction endodeoxyribonuclease RuvC.